A 177-amino-acid polypeptide reads, in one-letter code: tRNA (cytidine(56)-2'-O)-methyltransferase (177 aa).

S-adenosyl-L-methionine contacts are provided by residues leucine 84 and 109-113 (GAEKV).

The protein belongs to the aTrm56 family. In terms of assembly, homodimer.

The protein resides in the cytoplasm. The catalysed reaction is cytidine(56) in tRNA + S-adenosyl-L-methionine = 2'-O-methylcytidine(56) in tRNA + S-adenosyl-L-homocysteine + H(+). Specifically catalyzes the AdoMet-dependent 2'-O-ribose methylation of cytidine at position 56 in tRNAs. This chain is tRNA (cytidine(56)-2'-O)-methyltransferase, found in Methanosarcina acetivorans (strain ATCC 35395 / DSM 2834 / JCM 12185 / C2A).